Consider the following 435-residue polypeptide: Monodehydroascorbate reductase 2 (435 aa).

FAD contacts are provided by residues 14 to 17 (GGVA), Glu-41, Arg-48, Lys-53, Ile-96, and 147 to 148 (RE). NAD(+) is bound by residues 172–178 (GGYIGLE), Glu-196, Arg-202, and Gly-261. Residue 174–178 (YIGLE) coordinates NADP(+). The NADP(+) site is built by Arg-202 and Gly-261. An FAD-binding site is contributed by Asp-298. 314–315 (EH) is a binding site for NAD(+). Residue 314 to 315 (EH) participates in NADP(+) binding. Val-316 serves as a coordination point for FAD. Arg-320 contacts L-ascorbate. Tyr-349 contacts FAD. NAD(+) is bound at residue Tyr-349. Residue Tyr-349 participates in NADP(+) binding. Arg-351 is a binding site for L-ascorbate. Phosphoserine is present on Ser-417.

The protein belongs to the FAD-dependent oxidoreductase family. FAD is required as a cofactor.

The protein localises to the cytoplasm. The catalysed reaction is 2 monodehydro-L-ascorbate radical + NADH + H(+) = 2 L-ascorbate + NAD(+). Catalyzes the conversion of monodehydroascorbate to ascorbate, oxidizing NADH in the process. The polypeptide is Monodehydroascorbate reductase 2 (Arabidopsis thaliana (Mouse-ear cress)).